We begin with the raw amino-acid sequence, 193 residues long: Interferon epsilon (193 aa).

The N-terminal stretch at 1–21 is a signal peptide; that stretch reads MINKSFFEIMLVLLASSTGFS. The cysteines at positions 53 and 163 are disulfide-linked. Asparagine 139 is a glycosylation site (N-linked (GlcNAc...) asparagine).

It belongs to the alpha/beta interferon family.

The protein localises to the secreted. In terms of biological role, type I interferon required for maintaining basal levels of IFN-regulated genes, including 2'-5'-oligoadenylate synthetase, IRF7 and ISG15, in the female reproductive tract. Directly mediates protection against viral and bacterial genital infections. The polypeptide is Interferon epsilon (IFNE) (Sus scrofa (Pig)).